The following is a 474-amino-acid chain: ATP synthase subunit beta (474 aa).

152–159 (GGAGVGKT) is a binding site for ATP.

Belongs to the ATPase alpha/beta chains family. F-type ATPases have 2 components, CF(1) - the catalytic core - and CF(0) - the membrane proton channel. CF(1) has five subunits: alpha(3), beta(3), gamma(1), delta(1), epsilon(1). CF(0) has three main subunits: a(1), b(2) and c(9-12). The alpha and beta chains form an alternating ring which encloses part of the gamma chain. CF(1) is attached to CF(0) by a central stalk formed by the gamma and epsilon chains, while a peripheral stalk is formed by the delta and b chains.

It localises to the cell inner membrane. It catalyses the reaction ATP + H2O + 4 H(+)(in) = ADP + phosphate + 5 H(+)(out). In terms of biological role, produces ATP from ADP in the presence of a proton gradient across the membrane. The catalytic sites are hosted primarily by the beta subunits. This is ATP synthase subunit beta from Paramagnetospirillum magneticum (strain ATCC 700264 / AMB-1) (Magnetospirillum magneticum).